Reading from the N-terminus, the 79-residue chain is MKVLVAVLVFALLMCMFVDIAESRRRDNPEYPSGLRYDEEMGVFKRCAQTGGTCSKSKDCCIVTAICSTATSPKTCFYG.

Residues 1-23 (MKVLVAVLVFALLMCMFVDIAES) form the signal peptide. The propeptide occupies 24 to 46 (RRRDNPEYPSGLRYDEEMGVFKR). Intrachain disulfides connect Cys47/Cys61, Cys54/Cys67, and Cys60/Cys76. Tyr78 carries the tyrosine amide modification.

It is found in the secreted. The protein localises to the nematocyst. Functionally, alpha-toxins act on postsynaptic membranes, they bind to the nicotinic acetylcholine receptors (nAChR) and thus inhibit them. This toxin very weakly competes with alpha-bungarotoxin for binding to orthosteric sites on muscle-type T.carlifornicus (IC(50)=14.95 uM) and human alpha-7/CHRNA7 nAChRs (IC(50)&gt;45 uM). This is Alpha-actitoxin-Ms11a-4 from Metridium senile (Brown sea anemone).